Consider the following 137-residue polypeptide: Ribonuclease VapC51 (137 aa).

Residues 5-120 (YLLDTSVIKR…HYDADFDLIA (116 aa)) form the PINc domain. Mg(2+) is bound by residues D8 and D95.

This sequence belongs to the PINc/VapC protein family. Requires Mg(2+) as cofactor.

In terms of biological role, toxic component of a type II toxin-antitoxin (TA) system. An RNase. Its cognate antitoxin is VapB51. This is Ribonuclease VapC51 from Mycobacterium tuberculosis (strain ATCC 25618 / H37Rv).